Here is a 245-residue protein sequence, read N- to C-terminus: MKFLGIIPARYSSTRLEGKPLKMIEGHTMIEWVYKRAKKSNLDSLIVATDDERIYNEVINFGGQAIMTSKNHTNGTSRIAEVCEKMTEYDTIINIQGDEPLIEYEMINSLIETFKENKDLKMATLKHKLLNKEEIKNPNNVKVVCDKNDYAIYFSRSVIPYPRKNGNISYFKHIGIYGYKRDFVIEYSKMLATPLEEIESLEQLRVLENGYKIKVLETTHSLIGVDTQENLEQVINYIKENNIKI.

The protein belongs to the KdsB family.

The protein resides in the cytoplasm. It catalyses the reaction 3-deoxy-alpha-D-manno-oct-2-ulosonate + CTP = CMP-3-deoxy-beta-D-manno-octulosonate + diphosphate. It participates in nucleotide-sugar biosynthesis; CMP-3-deoxy-D-manno-octulosonate biosynthesis; CMP-3-deoxy-D-manno-octulosonate from 3-deoxy-D-manno-octulosonate and CTP: step 1/1. The protein operates within bacterial outer membrane biogenesis; lipopolysaccharide biosynthesis. In terms of biological role, activates KDO (a required 8-carbon sugar) for incorporation into bacterial lipopolysaccharide in Gram-negative bacteria. This is 3-deoxy-manno-octulosonate cytidylyltransferase from Fusobacterium nucleatum subsp. nucleatum (strain ATCC 25586 / DSM 15643 / BCRC 10681 / CIP 101130 / JCM 8532 / KCTC 2640 / LMG 13131 / VPI 4355).